Reading from the N-terminus, the 352-residue chain is Serine/threonine-protein phosphatase 2A activator 2 (352 aa).

This sequence belongs to the PTPA-type PPIase family.

It is found in the cytoplasm. The enzyme catalyses [protein]-peptidylproline (omega=180) = [protein]-peptidylproline (omega=0). In terms of biological role, PPIases accelerate the folding of proteins. It catalyzes the cis-trans isomerization of proline imidic peptide bonds in oligopeptides. Acts as a regulatory subunit for PP2A-like phosphatases modulating their activity or substrate specificity, probably by inducing a conformational change in the catalytic subunit, a direct target of the PPIase. Can reactivate inactive phosphatase PP2A-phosphatase methylesterase complexes (PP2Ai) in presence of ATP and Mg(2+) by dissociating the inactive form from the complex. This Schizosaccharomyces pombe (strain 972 / ATCC 24843) (Fission yeast) protein is Serine/threonine-protein phosphatase 2A activator 2 (rrd2).